Here is a 313-residue protein sequence, read N- to C-terminus: NADH-ubiquinone oxidoreductase chain 1 (313 aa).

8 helical membrane passes run 7–27 (LIGS…LTLL), 73–93 (IFYY…WMSM), 104–124 (LGVL…MVAG), 150–170 (LALI…LNFF), 175–195 (YMWF…SCLA), 226–246 (LIFL…SVIF), 250–270 (DIYS…FIWV), and 293–313 (MSLN…SMLF).

Belongs to the complex I subunit 1 family.

Its subcellular location is the mitochondrion inner membrane. It catalyses the reaction a ubiquinone + NADH + 5 H(+)(in) = a ubiquinol + NAD(+) + 4 H(+)(out). Core subunit of the mitochondrial membrane respiratory chain NADH dehydrogenase (Complex I) that is believed to belong to the minimal assembly required for catalysis. Complex I functions in the transfer of electrons from NADH to the respiratory chain. The immediate electron acceptor for the enzyme is believed to be ubiquinone. This chain is NADH-ubiquinone oxidoreductase chain 1, found in Aedes aegypti (Yellowfever mosquito).